We begin with the raw amino-acid sequence, 424 residues long: Microcin H47 secretion protein MchE (424 aa).

The Cytoplasmic portion of the chain corresponds to 1-25 (MFRQDALENRKMKWQGRAILLPGIP). The chain crosses the membrane as a helical span at residues 26–46 (LWLIMLGSIVFITAFLMFIIV). The Periplasmic segment spans residues 47–424 (GTYSRRVNVS…KHSATGPLND (378 aa)).

This sequence belongs to the membrane fusion protein (MFP) (TC 8.A.1) family.

It is found in the cell inner membrane. Probably involved, in conjunction with MchF, in the secretion of microcin H47. The polypeptide is Microcin H47 secretion protein MchE (mchE) (Escherichia coli).